A 185-amino-acid polypeptide reads, in one-letter code: Ribosome-recycling factor (185 aa).

This sequence belongs to the RRF family.

It localises to the cytoplasm. Responsible for the release of ribosomes from messenger RNA at the termination of protein biosynthesis. May increase the efficiency of translation by recycling ribosomes from one round of translation to another. In Shewanella sediminis (strain HAW-EB3), this protein is Ribosome-recycling factor.